Consider the following 364-residue polypeptide: MLRKLNTPTTTLVRAASTRVEKLEEIRERLSKGPNFQDFIQNSDGVKEDWENYDGKLRREKGETQQLRLPPWLKTTIPMGKNYAKIKSQLRDLKLSTVCEEARCPNIGECWGGGEHSTQTATIMLMGDTCTRGCRFCSVKTARAPPPLDVNEPVNTAKAISSWGLDYIVLTSVDRDDLPDGGSKHIAETVREIKARNSNIFVECLVPDFRGDLECVKTIASCGLDVYAHNIETVEKLTPFVRDRRAHYRQTLQVLREAKNFNPNLITKSSIMLGLGETDAEVEQTMQDLREVGVECLTLGQYMQPTKRHLKVIEYVTPEKFKHWEQRGNELGFLYTASGPLVRSSYKAGEFFITSILANRRKSV.

[4Fe-4S] cluster-binding residues include Cys-99, Cys-104, Cys-110, Cys-130, Cys-134, Cys-137, and Ser-345. The 219-residue stretch at 116-334 (HSTQTATIML…EQRGNELGFL (219 aa)) folds into the Radical SAM core domain.

The protein belongs to the radical SAM superfamily. Lipoyl synthase family. Requires [4Fe-4S] cluster as cofactor.

It is found in the mitochondrion. It catalyses the reaction [[Fe-S] cluster scaffold protein carrying a second [4Fe-4S](2+) cluster] + N(6)-octanoyl-L-lysyl-[protein] + 2 oxidized [2Fe-2S]-[ferredoxin] + 2 S-adenosyl-L-methionine + 4 H(+) = [[Fe-S] cluster scaffold protein] + N(6)-[(R)-dihydrolipoyl]-L-lysyl-[protein] + 4 Fe(3+) + 2 hydrogen sulfide + 2 5'-deoxyadenosine + 2 L-methionine + 2 reduced [2Fe-2S]-[ferredoxin]. It participates in protein modification; protein lipoylation via endogenous pathway; protein N(6)-(lipoyl)lysine from octanoyl-[acyl-carrier-protein]: step 2/2. In terms of biological role, catalyzes the radical-mediated insertion of two sulfur atoms into the C-6 and C-8 positions of the octanoyl moiety bound to the lipoyl domains of lipoate-dependent enzymes, thereby converting the octanoylated domains into lipoylated derivatives. This chain is Lipoyl synthase, mitochondrial, found in Drosophila mojavensis (Fruit fly).